We begin with the raw amino-acid sequence, 398 residues long: Phosphoglycerate kinase (398 aa).

Substrate-binding positions include 23–25 (DFN), R38, 61–64 (HMGK), R122, and R155. Residues K206, G297, E328, and 354–357 (GGDS) contribute to the ATP site.

This sequence belongs to the phosphoglycerate kinase family. In terms of assembly, monomer.

The protein resides in the cytoplasm. It carries out the reaction (2R)-3-phosphoglycerate + ATP = (2R)-3-phospho-glyceroyl phosphate + ADP. It participates in carbohydrate degradation; glycolysis; pyruvate from D-glyceraldehyde 3-phosphate: step 2/5. This chain is Phosphoglycerate kinase, found in Clostridium botulinum (strain Loch Maree / Type A3).